The primary structure comprises 135 residues: Large ribosomal subunit protein uL16c (135 aa).

The protein belongs to the universal ribosomal protein uL16 family. In terms of assembly, part of the 50S ribosomal subunit.

It is found in the plastid. The protein resides in the chloroplast. This chain is Large ribosomal subunit protein uL16c, found in Platanus occidentalis (Sycamore).